The chain runs to 658 residues: Probable rhamnogalacturonate lyase B (658 aa).

Positions 1 to 19 are cleaved as a signal peptide; it reads MRFAIPLGAACAWAGVALA. Residues Asn-110, Asn-143, Asn-239, Asn-280, Asn-522, Asn-530, Asn-592, and Asn-633 are each glycosylated (N-linked (GlcNAc...) asparagine).

This sequence belongs to the polysaccharide lyase 4 family.

It is found in the secreted. It carries out the reaction Endotype eliminative cleavage of L-alpha-rhamnopyranosyl-(1-&gt;4)-alpha-D-galactopyranosyluronic acid bonds of rhamnogalacturonan I domains in ramified hairy regions of pectin leaving L-rhamnopyranose at the reducing end and 4-deoxy-4,5-unsaturated D-galactopyranosyluronic acid at the non-reducing end.. Pectinolytic enzymes consist of four classes of enzymes: pectin lyase, polygalacturonase, pectin methylesterase and rhamnogalacturonase. Degrades the rhamnogalacturonan I (RG-I) backbone of pectin. This is Probable rhamnogalacturonate lyase B (rglB) from Aspergillus fumigatus (strain CBS 144.89 / FGSC A1163 / CEA10) (Neosartorya fumigata).